Consider the following 211-residue polypeptide: Transcription factor bHLH150 (211 aa).

Positions 1–15 are enriched in polar residues; the sequence is MSSEQGNGSNPSTSP. Positions 1–23 are disordered; sequence MSSEQGNGSNPSTSPEVEGTKTI. In terms of domain architecture, bHLH spans 135 to 184; the sequence is AIRGSGGSGRRRKLSAVGNRVRVLGGLVPGCRRTALPELLDETADYIAAL.

As to quaternary structure, homodimer. Interacts with PRE3 and ASK7. Post-translationally, phosphorylated by ASK7.

It is found in the nucleus. Functionally, atypical bHLH transcription factor probably unable to bind DNA. Negatively regulates brassinosteroid signaling. In Arabidopsis thaliana (Mouse-ear cress), this protein is Transcription factor bHLH150 (BHLH150).